The primary structure comprises 130 residues: Transcription antitermination protein NusB (130 aa).

Belongs to the NusB family.

In terms of biological role, involved in transcription antitermination. Required for transcription of ribosomal RNA (rRNA) genes. Binds specifically to the boxA antiterminator sequence of the ribosomal RNA (rrn) operons. The chain is Transcription antitermination protein NusB from Bacillus cereus (strain B4264).